Here is a 480-residue protein sequence, read N- to C-terminus: EGF-like repeat and discoidin I-like domain-containing protein 3 (480 aa).

A signal peptide spans 1–23; sequence MKHLVAAWLLVGLSLGVPQFGKG. The 37-residue stretch at 24–60 folds into the EGF-like 1 domain; the sequence is DICNPNPCENGGICLSGLADDSFSCECPEGFAGPNCS. Intrachain disulfides connect Cys-26–Cys-37, Cys-31–Cys-48, and Cys-50–Cys-59. Residue Thr-73 is glycosylated (O-linked (GalNAc...) threonine). EGF-like domains lie at 74-117 and 119-155; these read SAGP…IHCQ and NINE…RNCQ. Cystine bridges form between Cys-78-Cys-89, Cys-83-Cys-105, and Cys-107-Cys-116. A glycan (O-linked (Fuc...) threonine) is linked at Thr-88. The Cell attachment site motif lies at 96–98; it reads RGD. 3 residues coordinate Ca(2+): Asn-119, Ile-120, and Glu-122. 6 cysteine pairs are disulfide-bonded: Cys-123–Cys-134, Cys-128–Cys-143, Cys-145–Cys-154, Cys-158–Cys-314, Cys-301–Cys-305, and Cys-319–Cys-476. Residues Asp-136 and Leu-137 each coordinate Ca(2+). N-linked (GlcNAc...) asparagine glycosylation is present at Asn-140. 2 F5/8 type C domains span residues 158–314 and 319–476; these read CSGP…LLGC and CSEP…LLGC.

As to expression, expressed in angioblasts and early endothelial cells. By embryonic day 13.5, also expressed in a restricted group of non-endothelial cells including chondrocytes and retinal neurons.

Its subcellular location is the secreted. Functionally, promotes adhesion of endothelial cells through interaction with the alpha-v/beta-3 integrin receptor. Inhibits formation of vascular-like structures. May be involved in regulation of vascular morphogenesis of remodeling in embryonic development. The sequence is that of EGF-like repeat and discoidin I-like domain-containing protein 3 (Edil3) from Mus musculus (Mouse).